A 316-amino-acid chain; its full sequence is Ribosomal RNA small subunit methyltransferase H (316 aa).

Residues 35–37, D55, F84, D105, and Q112 contribute to the S-adenosyl-L-methionine site; that span reads AGH.

This sequence belongs to the methyltransferase superfamily. RsmH family.

The protein resides in the cytoplasm. It catalyses the reaction cytidine(1402) in 16S rRNA + S-adenosyl-L-methionine = N(4)-methylcytidine(1402) in 16S rRNA + S-adenosyl-L-homocysteine + H(+). Its function is as follows. Specifically methylates the N4 position of cytidine in position 1402 (C1402) of 16S rRNA. This chain is Ribosomal RNA small subunit methyltransferase H, found in Streptococcus mutans serotype c (strain ATCC 700610 / UA159).